The primary structure comprises 345 residues: MSDLRVAVLGVGVMGADHVERLSTRIAGVKVAVVNDFIETRAEEIAAGVPGCRVVSDPLEAIADPDVDAVVLATPGPTHDKQLLACLEQRKPVLCEKPLTTDVDSALDVVRREAELGVRLIQVGFMRRFDPEYAELKTLIDAGEFGQPLVLHCVHRNAAVPPSFDSTMIVKDSLVHEVDVTRFLFDEEIASVHILRPTPNPGAPEGIQDPQIAIMKTPSGKHVDVELFVTTGVGYEVRTELVAEKGTAMIGLDVGLIRKGVPGTWGGAIAPDFRVRFGTAYDIEFQRWVAAVRHGIATGSDDYTDGPTAWDGYAAAAVCAAGVESLAGGQPVEVKMVERASINGA.

Belongs to the Gfo/Idh/MocA family. As to quaternary structure, homotetramer.

It catalyses the reaction myo-inositol + NAD(+) = scyllo-inosose + NADH + H(+). In terms of biological role, involved in the oxidation of myo-inositol (MI) to 2-keto-myo-inositol (2KMI or 2-inosose). This is Inositol 2-dehydrogenase from Mycolicibacterium smegmatis (strain ATCC 700084 / mc(2)155) (Mycobacterium smegmatis).